Here is a 229-residue protein sequence, read N- to C-terminus: PKHD-type hydroxylase RPA3479 (229 aa).

The Fe2OG dioxygenase domain occupies 78 to 180; it reads QIFPPLFNRY…RVASFFWLQS (103 aa). Positions 98, 100, and 161 each coordinate Fe cation. Residue arginine 171 coordinates 2-oxoglutarate.

It depends on Fe(2+) as a cofactor. L-ascorbate is required as a cofactor.

The polypeptide is PKHD-type hydroxylase RPA3479 (Rhodopseudomonas palustris (strain ATCC BAA-98 / CGA009)).